The primary structure comprises 2153 residues: Genome polyprotein (2153 aa).

Gly2 carries the N-myristoyl glycine; by host lipid modification. The Cytoplasmic segment spans residues 2 to 1466; the sequence is GAQVSRQNVG…DLNIANSIIT (1465 aa). The segment at 565 to 582 is amphipathic alpha-helix; it reads PITQNPVERYVDEVLNEV. Active-site for protease 2A activity residues include His871 and Asp888. Positions 905 and 907 each coordinate Zn(2+). The For protease 2A activity role is filled by Cys959. 2 residues coordinate Zn(2+): Cys965 and His967. Residues 1091-1160 form a membrane-binding region; that stretch reads SDSWLKKFTE…NLRAADTNTQ (70 aa). Residues 1091 to 1224 are oligomerization; the sequence is SDSWLKKFTE…PPGTGKSITT (134 aa). The tract at residues 1112–1116 is RNA-binding; the sequence is GNKIS. Residues 1186-1346 enclose the SF3 helicase domain; the sequence is KRIKVLYHKC…YKDNQGKLDV (161 aa). Zn(2+) is bound by residues Cys1353, Cys1364, and Cys1369. The C4-type; degenerate zinc-finger motif lies at 1353 to 1369; sequence CDVDSKIGNAKCCPFVC. The RNA-binding stretch occupies residues 1396 to 1403; it reads EDKRRRQV. The interval 1407–1412 is oligomerization; sequence MSAIFQ. The stretch at 1467 to 1482 is an intramembrane region; the sequence is IIANIISIAGIIYIIY. Topologically, residues 1483 to 2153 are cytoplasmic; sequence KLFCSLQGPY…LLRHEWYEKF (671 aa). Position 1492 is an O-(5'-phospho-RNA)-tyrosine (Tyr1492). In terms of domain architecture, Peptidase C3 spans 1511–1689; the sequence is GPEEEFGMSI…FSSMLLRSYF (179 aa). Catalysis depends on for protease 3C activity residues His1550, Glu1581, and Cys1657. The 114-residue stretch at 1921–2034 folds into the RdRp catalytic domain; the sequence is DCIMAFDYTN…SYKYKLDMEA (114 aa). Mg(2+) contacts are provided by Asp1927 and Asp2020.

It belongs to the picornaviruses polyprotein family. As to quaternary structure, interacts with capsid protein VP1 and capsid protein VP3 to form heterotrimeric protomers. In terms of assembly, interacts with capsid protein VP0, and capsid protein VP3 to form heterotrimeric protomers. Five protomers subsequently associate to form pentamers which serve as building blocks for the capsid. Interacts with capsid protein VP2, capsid protein VP3 and capsid protein VP4 following cleavage of capsid protein VP0. Interacts with capsid protein VP1 and capsid protein VP3 in the mature capsid. As to quaternary structure, interacts with capsid protein VP0 and capsid protein VP1 to form heterotrimeric protomers. Five protomers subsequently associate to form pentamers which serve as building blocks for the capsid. Interacts with capsid protein VP4 in the mature capsid. Interacts with protein 2C; this interaction may be important for virion morphogenesis. In terms of assembly, interacts with capsid protein VP1 and capsid protein VP3. Homodimer. As to quaternary structure, homohexamer; forms a hexameric ring structure with 6-fold symmetry characteristic of AAA+ ATPases. Interacts (via N-terminus) with host RTN3 (via reticulon domain); this interaction is important for viral replication. Interacts with capsid protein VP3; this interaction may be important for virion morphogenesis. In terms of assembly, interacts with protein 3CD. Homodimer. Interacts with host GBF1. Interacts (via GOLD domain) with host ACBD3 (via GOLD domain); this interaction allows the formation of a viral protein 3A/ACBD3 heterotetramer with a 2:2 stoichiometry, which will stimulate the recruitment of host PI4KB in order to synthesize PI4P at the viral RNA replication sites. As to quaternary structure, interacts with RNA-directed RNA polymerase. In terms of assembly, interacts with protein 3AB and with RNA-directed RNA polymerase. Interacts with Viral protein genome-linked and with protein 3CD. The cofactor is Mg(2+). In terms of processing, specific enzymatic cleavages in vivo by the viral proteases yield processing intermediates and the mature proteins. Myristoylation is required for the formation of pentamers during virus assembly. Further assembly of 12 pentamers and a molecule of genomic RNA generates the provirion. Post-translationally, during virion maturation, immature virions are rendered infectious following cleavage of VP0 into VP4 and VP2. This maturation seems to be an autocatalytic event triggered by the presence of RNA in the capsid and it is followed by a conformational change infectious virion. In terms of processing, myristoylation is required during RNA encapsidation and formation of the mature virus particle. VPg is uridylylated by the polymerase into VPg-pUpU. This acts as a nucleotide-peptide primer for the genomic RNA replication.

The protein localises to the virion. The protein resides in the host cytoplasm. It localises to the host cytoplasmic vesicle membrane. It is found in the host nucleus. The catalysed reaction is a ribonucleoside 5'-triphosphate + H2O = a ribonucleoside 5'-diphosphate + phosphate + H(+). It catalyses the reaction Selective cleavage of Tyr-|-Gly bond in the picornavirus polyprotein.. It carries out the reaction RNA(n) + a ribonucleoside 5'-triphosphate = RNA(n+1) + diphosphate. The enzyme catalyses Selective cleavage of Gln-|-Gly bond in the poliovirus polyprotein. In other picornavirus reactions Glu may be substituted for Gln, and Ser or Thr for Gly.. Replication or transcription is subject to high level of random mutations by the nucleotide analog ribavirin. Functionally, forms an icosahedral capsid of pseudo T=3 symmetry with capsid proteins VP2 and VP3. The capsid is 300 Angstroms in diameter, composed of 60 copies of each capsid protein and enclosing the viral positive strand RNA genome. Capsid protein VP1 mainly forms the vertices of the capsid. Capsid protein VP1 interacts with host cell receptor to provide virion attachment to target host cells. This attachment induces virion internalization. Tyrosine kinases are probably involved in the entry process. After binding to its receptor, the capsid undergoes conformational changes. Capsid protein VP1 N-terminus (that contains an amphipathic alpha-helix) and capsid protein VP4 are externalized. Together, they shape a pore in the host membrane through which viral genome is translocated to host cell cytoplasm. Its function is as follows. Forms an icosahedral capsid of pseudo T=3 symmetry with capsid proteins VP2 and VP3. The capsid is 300 Angstroms in diameter, composed of 60 copies of each capsid protein and enclosing the viral positive strand RNA genome. Lies on the inner surface of the capsid shell. After binding to the host receptor, the capsid undergoes conformational changes. Capsid protein VP4 is released, Capsid protein VP1 N-terminus is externalized, and together, they shape a pore in the host membrane through which the viral genome is translocated into the host cell cytoplasm. In terms of biological role, component of immature procapsids, which is cleaved into capsid proteins VP4 and VP2 after maturation. Allows the capsid to remain inactive before the maturation step. Functionally, cysteine protease that cleaves viral polyprotein and specific host proteins. It is responsible for the autocatalytic cleavage between the P1 and P2 regions, which is the first cleavage occurring in the polyprotein. Also cleaves the host translation initiation factor EIF4G1, in order to shut down the capped cellular mRNA translation. Inhibits the host nucleus-cytoplasm protein and RNA trafficking by cleaving host members of the nuclear pores. Counteracts stress granule formation probably by antagonizing its assembly or promoting its dissassembly. Its function is as follows. Plays an essential role in the virus replication cycle by acting as a viroporin. Creates a pore in the host endoplasmic reticulum and as a consequence releases Ca2+ in the cytoplasm of infected cell. In turn, high levels of cytoplasmic calcium may trigger membrane trafficking and transport of viral ER-associated proteins to viroplasms, sites of viral genome replication. Induces and associates with structural rearrangements of intracellular membranes. Displays RNA-binding, nucleotide binding and NTPase activities. May play a role in virion morphogenesis and viral RNA encapsidation by interacting with the capsid protein VP3. In terms of biological role, localizes the viral replication complex to the surface of membranous vesicles. It inhibits host cell endoplasmic reticulum-to-Golgi apparatus transport and causes the disassembly of the Golgi complex, possibly through GBF1 interaction. This would result in depletion of MHC, trail receptors and IFN receptors at the host cell surface. Plays an essential role in viral RNA replication by recruiting ACBD3 and PI4KB at the viral replication sites, thereby allowing the formation of the rearranged membranous structures where viral replication takes place. Functionally, acts as a primer for viral RNA replication and remains covalently bound to viral genomic RNA. VPg is uridylylated prior to priming replication into VPg-pUpU. The oriI viral genomic sequence may act as a template for this. The VPg-pUpU is then used as primer on the genomic RNA poly(A) by the RNA-dependent RNA polymerase to replicate the viral genome. During genome replication, the VPg-RNA linkage is removed by the host TDP2, thereby accelerating replication. During the late stage of the replication cycle, host TDP2 is excluded from sites of viral RNA synthesis and encapsidation, allowing for the generation of progeny virions. Its function is as follows. Involved in the viral replication complex and viral polypeptide maturation. It exhibits protease activity with a specificity and catalytic efficiency that is different from protease 3C. Protein 3CD lacks polymerase activity. Protein 3CD binds to the 5'UTR of the viral genome. Major viral protease that mediates proteolytic processing of the polyprotein. Cleaves host EIF5B, contributing to host translation shutoff. Also cleaves host PABPC1, contributing to host translation shutoff. Cleaves host NLRP1, triggers host N-glycine-mediated degradation of the autoinhibitory NLRP1 N-terminal fragment. In terms of biological role, replicates the viral genomic RNA on the surface of intracellular membranes. May form linear arrays of subunits that propagate along a strong head-to-tail interaction called interface-I. Covalently attaches UMP to a tyrosine of VPg, which is used to prime RNA synthesis. The positive stranded RNA genome is first replicated at virus induced membranous vesicles, creating a dsRNA genomic replication form. This dsRNA is then used as template to synthesize positive stranded RNA genomes. ss(+)RNA genomes are either translated, replicated or encapsidated. This chain is Genome polyprotein, found in Human rhinovirus 16 (HRV-16).